We begin with the raw amino-acid sequence, 165 residues long: Cathelicidin-7 (165 aa).

Residues 1 to 29 (METQRASFSLGRSSLWLLLLGLVVPSASA) form the signal peptide. A propeptide spanning residues 30–130 (QDLSYREAVL…FDITCNNIQS (101 aa)) is cleaved from the precursor. 2 disulfides stabilise this stretch: Cys86-Cys97 and Cys108-Cys125. Arg164 carries the post-translational modification Arginine amide.

It belongs to the cathelicidin family. Expressed in bone marrow myeloid cells, spleen and testis.

The protein resides in the secreted. In terms of biological role, exerts a potent antimicrobial activity. The protein is Cathelicidin-7 (CATHL7) of Bos taurus (Bovine).